Reading from the N-terminus, the 498-residue chain is Glycerol kinase (498 aa).

Residue T12 coordinates ADP. ATP-binding residues include T12, T13, and S14. T12 is a binding site for sn-glycerol 3-phosphate. R16 provides a ligand contact to ADP. Sn-glycerol 3-phosphate is bound by residues R82, E83, Y135, and D245. 5 residues coordinate glycerol: R82, E83, Y135, D245, and Q246. 2 residues coordinate ADP: T267 and G310. The ATP site is built by T267, G310, Q314, and G411. ADP is bound by residues G411 and N415.

Belongs to the FGGY kinase family. As to quaternary structure, homotetramer and homodimer (in equilibrium).

The enzyme catalyses glycerol + ATP = sn-glycerol 3-phosphate + ADP + H(+). The protein operates within polyol metabolism; glycerol degradation via glycerol kinase pathway; sn-glycerol 3-phosphate from glycerol: step 1/1. With respect to regulation, activated by phosphorylation and inhibited by fructose 1,6-bisphosphate (FBP). Functionally, key enzyme in the regulation of glycerol uptake and metabolism. Catalyzes the phosphorylation of glycerol to yield sn-glycerol 3-phosphate. This is Glycerol kinase from Clostridium botulinum (strain Eklund 17B / Type B).